The chain runs to 115 residues: Large ribosomal subunit protein bL19 (115 aa).

This sequence belongs to the bacterial ribosomal protein bL19 family.

In terms of biological role, this protein is located at the 30S-50S ribosomal subunit interface and may play a role in the structure and function of the aminoacyl-tRNA binding site. The chain is Large ribosomal subunit protein bL19 from Desulforamulus reducens (strain ATCC BAA-1160 / DSM 100696 / MI-1) (Desulfotomaculum reducens).